Consider the following 166-residue polypeptide: Probable chemoreceptor glutamine deamidase CheD (166 aa).

This sequence belongs to the CheD family.

The catalysed reaction is L-glutaminyl-[protein] + H2O = L-glutamyl-[protein] + NH4(+). In terms of biological role, probably deamidates glutamine residues to glutamate on methyl-accepting chemotaxis receptors (MCPs), playing an important role in chemotaxis. The protein is Probable chemoreceptor glutamine deamidase CheD of Oceanobacillus iheyensis (strain DSM 14371 / CIP 107618 / JCM 11309 / KCTC 3954 / HTE831).